Here is a 348-residue protein sequence, read N- to C-terminus: SUMO-activating enzyme subunit 1 (348 aa).

It belongs to the ubiquitin-activating E1 family. Heterodimer of sae1 and uba2/sae2. The heterodimer corresponds to the two domains that are encoded on a single polypeptide chain in ubiquitin-activating enzyme E1. Interacts with ube2i.

The protein localises to the nucleus. Its pathway is protein modification; protein sumoylation. Its function is as follows. The heterodimer acts as an E1 ligase for sumo1, sumo2, and sumo3. It mediates ATP-dependent activation of sumo proteins followed by formation of a thioester bond between a sumo protein and a conserved active site cysteine residue on uba2/sae2. The sequence is that of SUMO-activating enzyme subunit 1 (sae1) from Danio rerio (Zebrafish).